The following is a 104-amino-acid chain: Ubiquitin-related modifier 1 homolog (104 aa).

Position 104 is a 1-thioglycine (Gly-104). Gly-104 is covalently cross-linked (Glycyl lysine isopeptide (Gly-Lys) (interchain with K-? in acceptor proteins)).

It belongs to the URM1 family. As to quaternary structure, interacts with cer. Post-translationally, C-terminal thiocarboxylation occurs in 2 steps, it is first acyl-adenylated (-COAMP) via the hesA/moeB/thiF part of the MOCS3 homolog, then thiocarboxylated (-COSH) via the rhodanese domain of the MOCS3 homolog.

Its subcellular location is the cytoplasm. The protein operates within tRNA modification; 5-methoxycarbonylmethyl-2-thiouridine-tRNA biosynthesis. Acts as a sulfur carrier required for 2-thiolation of mcm(5)S(2)U at tRNA wobble positions of cytosolic tRNA(Lys), tRNA(Glu) and tRNA(Gln). Serves as sulfur donor in tRNA 2-thiolation reaction by being thiocarboxylated (-COSH) at its C-terminus by MOCS3. The sulfur is then transferred to tRNA to form 2-thiolation of mcm(5)S(2)U. Also acts as a ubiquitin-like protein (UBL) that is covalently conjugated via an isopeptide bond to lysine residues of target proteins such as Prx2/Jafrac1, Ciao1, Eip71CD and GILT1. The thiocarboxylated form serves as substrate for conjugation and oxidative stress specifically induces the formation of UBL-protein conjugates. The sequence is that of Ubiquitin-related modifier 1 homolog from Drosophila grimshawi (Hawaiian fruit fly).